The sequence spans 203 residues: Small ribosomal subunit protein uS4 (203 aa).

The region spanning 93–156 (QRLDNVVYRL…MKVPAILEAV (64 aa)) is the S4 RNA-binding domain.

This sequence belongs to the universal ribosomal protein uS4 family. As to quaternary structure, part of the 30S ribosomal subunit. Contacts protein S5. The interaction surface between S4 and S5 is involved in control of translational fidelity.

In terms of biological role, one of the primary rRNA binding proteins, it binds directly to 16S rRNA where it nucleates assembly of the body of the 30S subunit. Its function is as follows. With S5 and S12 plays an important role in translational accuracy. In Lactococcus lactis subsp. cremoris (strain MG1363), this protein is Small ribosomal subunit protein uS4.